The primary structure comprises 422 residues: Ferrochelatase, mitochondrial (422 aa).

The N-terminal 53 residues, 1 to 53 (MLSASANMAAALRAAGALLREPLVHGSSRACQPWRCQSGAAVAATTEKVHHAK), are a transit peptide targeting the mitochondrion. Position 56 is an N6-acetyllysine (K56). Protoporphyrin IX contacts are provided by R114, Y122, and S129. K137 bears the N6-succinyllysine mark. [2Fe-2S] cluster is bound at residue C195. Residue H229 is part of the active site. An N6-acetyllysine; alternate modification is found at K289. The residue at position 289 (K289) is an N6-succinyllysine; alternate. The active site involves D382. 3 residues coordinate [2Fe-2S] cluster: C402, C405, and C410. At K414 the chain carries N6-acetyllysine; alternate. Residue K414 is modified to N6-succinyllysine; alternate.

Belongs to the ferrochelatase family. As to quaternary structure, homodimer. Homotetramer. Interaction with PGRMC1; the interaction results in decreased FECH activity. Interacts with ABCB10 and SLC25A37; this interaction forms an oligomeric complex. Forms a complex with ABCB7 and ABCB10, where a dimeric FECH bridges ABCB7 and ABCB10 homodimers; this complex may be required for cellular iron homeostasis, mitochondrial function and heme biosynthesis. Interacts with ABCB7 and ABCB10. The cofactor is [2Fe-2S] cluster. In terms of tissue distribution, erythroid and hepatic cells.

It localises to the mitochondrion inner membrane. The enzyme catalyses heme b + 2 H(+) = protoporphyrin IX + Fe(2+). It functions in the pathway porphyrin-containing compound metabolism; protoheme biosynthesis; protoheme from protoporphyrin-IX: step 1/1. In terms of biological role, catalyzes the ferrous insertion into protoporphyrin IX. This Mus musculus (Mouse) protein is Ferrochelatase, mitochondrial.